Reading from the N-terminus, the 465-residue chain is MPQTPTRLVSPYGSDRLVQLAARLRPALCDTLITVGGLEFPAHSLVLAGASPRLGCRGRWALVEDISPSTFAQILTFVYGESIELQPGELGDLEEAAKALGVQALEEACQRAQKGKDEDELDPGLKRHQQSEDFMRGSERGLGSPGEKQKPEKDFRSNGREQEMSHKHKAPGERPEMAGATRMMSSEEVMRGIESHKGSEESLRGCPDPLSPPGSLLTSLIPRPWWAEVPRLGEGQSALWSILLWPSRYGAPFSHSTPITAAWQVRPQDQRIPLTLNHSKALWSQNQLASSSPTPGSFPQGTESLSPWQIETSGQGFTGTLATCVSQERTLNCPSHQHPPLPSPARSRPYSCSVCGKRFSLKHQMETHYRVHTGEKPFSCSLCPQRSRDFSAMTKHLRTHGAAPYRCPLCRAGCPSLASMQAHMRGHSPSRLPPGWTIRSTFLYSSSRPTRASSSPGSPTSSAAT.

Positions 29-87 constitute a BTB domain; that stretch reads CDTLITVGGLEFPAHSLVLAGASPRLGCRGRWALVEDISPSTFAQILTFVYGESIELQP. 2 disordered regions span residues 111-179 and 285-310; these read RAQK…EMAG and QNQLASSSPTPGSFPQGTESLSPWQI. Basic and acidic residues-rich tracts occupy residues 123 to 139 and 147 to 176; these read PGLKRHQQSEDFMRGSE and EKQKPEKDFRSNGREQEMSHKHKAPGERPE. 3 consecutive C2H2-type zinc fingers follow at residues 350–372, 378–400, and 405–427; these read YSCSVCGKRFSLKHQMETHYRVH, FSCSLCPQRSRDFSAMTKHLRTH, and YRCPLCRAGCPSLASMQAHMRGH.

It belongs to the krueppel C2H2-type zinc-finger protein family. Homodimer (via PTB domain). Interacts with the N-terminal of FANCC. Interacts with ZBTB16. Interacts with GATA3. In terms of tissue distribution, isoform 1 is testis-specific and is not expressed in lymphoid organs such as thymus or spleen. Isoform 2 is expressed in both B- and T-lymphoid cells.

The protein resides in the nucleus. Functionally, DNA-binding protein that binds to the to a 5'-TGTACAGTGT-3' core sequence. May function as a transcriptional transactivator and transcriptional repressor. Probably exerts its repressor effect by preventing GATA3 from binding to DNA. May play a role in regulating the differentiation and activation of helper T-cells. The polypeptide is Zinc finger and BTB domain-containing protein 32 (Zbtb32) (Mus musculus (Mouse)).